The sequence spans 186 residues: Putative manganese efflux pump MntP (186 aa).

The next 6 membrane-spanning stretches (helical) occupy residues 1–21, 41–61, 62–82, 105–127, 139–159, and 163–183; these read MSFL…FAVS, VFFG…GSAV, SGFV…FIGG, LFLL…AFLG, CVTF…GHFF, and VEIL…AEHM.

This sequence belongs to the MntP (TC 9.B.29) family.

The protein localises to the cell membrane. In terms of biological role, probably functions as a manganese efflux pump. This Methanosarcina mazei (strain ATCC BAA-159 / DSM 3647 / Goe1 / Go1 / JCM 11833 / OCM 88) (Methanosarcina frisia) protein is Putative manganese efflux pump MntP.